The primary structure comprises 438 residues: Protein kinase PINOID (438 aa).

Residues 1-24 are disordered; that stretch reads MLRESDGEMSLGTTNSPISSGTES. The span at 11 to 24 shows a compositional bias: polar residues; sequence LGTTNSPISSGTES. The Protein kinase domain maps to 75–394; the sequence is FRLMRRIGAG…AAEVKVHPFF (320 aa). Residues 81 to 89 and Lys109 contribute to the ATP site; that span reads IGAGDIGTV. Asp205 serves as the catalytic Proton acceptor. An AGC-kinase C-terminal domain is found at 395–438; the sequence is KGLNFALIRTLTPPEIPSSVVKKPMKSATFSGRSSNKPAAFDYF.

This sequence belongs to the protein kinase superfamily. Ser/Thr protein kinase family. Interacts with PDK1, CML12 and PBP1. Component of a complex made of PINs (e.g. PIN1 and PIN2), MAB4/MELs (e.g. NPY1/MAB4 and NPY5/MEL1) and AGC kinases (e.g. D6PK and PID) at the plasma membrane. Binds directly to PIN2, NPY1/MAB4 and NPY5/MEL1. Autophosphorylated. Phosphorylated by PDK1. In terms of tissue distribution, expressed in root hair cells, shoot xylem parenchyma cells and endodermis around the vasculature. Expressed in anther primordia, vasculature of the growing flower stalk, young pedicels and bracts and developing sepals, but not in petals. In pistils, transiently expressed in the vasculature of the style and the septum, and in the integuments and funiculus of the developing ovule.

Its subcellular location is the cytoplasm. The protein resides in the cytosol. It localises to the cell membrane. It catalyses the reaction L-seryl-[protein] + ATP = O-phospho-L-seryl-[protein] + ADP + H(+). It carries out the reaction L-threonyl-[protein] + ATP = O-phospho-L-threonyl-[protein] + ADP + H(+). Activated by magnesium and PDK1. Inhibited by staurosporine. Repressed by calcium. Functionally, serine/threonine-protein kinase involved in the regulation of auxin signaling. Acts as a positive regulator of cellular auxin efflux and regulates organ development by enhancing polar auxin transport. Phosphorylates conserved serine residues in the PIN auxin efflux carriers. Phosphorylation of PIN proteins is required and sufficient for apical-basal PIN polarity that enables directional intercellular auxin fluxes, which mediate differential growth, tissue patterning and organogenesis. Phosphorylates PIN proteins (e.g. PIN1 and PIN2), especially when NPY proteins (e.g. NPY1/MAB4 and NPY5/MEL1) are recruited at the plasma membrane; this enhances the polarized localizations (apical or basal) of PINs in the cell by limiting their lateral diffusion-based escape. Acts in association with PIN1 to control the establishment of bilateral symmetry and promotion of cotyledon outgrowth. Regulates root gravitropism through modulation of PIN2-dependent basipetal auxin transport. Required for polarization of PIN3-dependent auxin transport for hypocotyl gravitropic response. The protein kinase activity of PID is essential for its auxin efflux regulatory function. PID kinase and PP2A phosphatase activities antagonistically regulate phosphorylation of PIN proteins, affecting PIN sorting. This is Protein kinase PINOID from Arabidopsis thaliana (Mouse-ear cress).